A 917-amino-acid polypeptide reads, in one-letter code: Isoleucine--tRNA ligase (917 aa).

Residues 59–69 carry the 'HIGH' region motif; it reads PYANGHIHIGH. Residue Glu569 participates in L-isoleucyl-5'-AMP binding. Residues 610–614 carry the 'KMSKS' region motif; the sequence is KMSKS. Lys613 is an ATP binding site. Residues Cys890, Cys893, Cys905, and Cys908 each contribute to the Zn(2+) site.

It belongs to the class-I aminoacyl-tRNA synthetase family. IleS type 1 subfamily. Monomer. Zn(2+) is required as a cofactor.

It is found in the cytoplasm. It catalyses the reaction tRNA(Ile) + L-isoleucine + ATP = L-isoleucyl-tRNA(Ile) + AMP + diphosphate. Catalyzes the attachment of isoleucine to tRNA(Ile). As IleRS can inadvertently accommodate and process structurally similar amino acids such as valine, to avoid such errors it has two additional distinct tRNA(Ile)-dependent editing activities. One activity is designated as 'pretransfer' editing and involves the hydrolysis of activated Val-AMP. The other activity is designated 'posttransfer' editing and involves deacylation of mischarged Val-tRNA(Ile). The sequence is that of Isoleucine--tRNA ligase from Campylobacter jejuni subsp. jejuni serotype O:2 (strain ATCC 700819 / NCTC 11168).